A 612-amino-acid polypeptide reads, in one-letter code: 2-isopropylmalate synthase B (612 aa).

Positions 71 to 344 (VRIFDTTLRD…YTGINTQHIL (274 aa)) constitute a Pyruvate carboxyltransferase domain. A divalent metal cation contacts are provided by Asp-80, His-277, and Asn-313.

This sequence belongs to the alpha-IPM synthase/homocitrate synthase family. LeuA type 1 subfamily. Homodimer. A divalent metal cation is required as a cofactor.

It catalyses the reaction 3-methyl-2-oxobutanoate + acetyl-CoA + H2O = (2S)-2-isopropylmalate + CoA + H(+). It participates in amino-acid biosynthesis; L-leucine biosynthesis; L-leucine from 3-methyl-2-oxobutanoate: step 1/4. Its function is as follows. Catalyzes the condensation of the acetyl group of acetyl-CoA with 3-methyl-2-oxobutanoate (2-oxoisovalerate) to form 3-carboxy-3-hydroxy-4-methylpentanoate (2-isopropylmalate). The chain is 2-isopropylmalate synthase B (IPMSB) from Solanum pennellii (Tomato).